The primary structure comprises 236 residues: Small ribosomal subunit protein uS2c (236 aa).

This sequence belongs to the universal ribosomal protein uS2 family.

The protein resides in the plastid. Its subcellular location is the chloroplast. This is Small ribosomal subunit protein uS2c (rps2) from Physcomitrium patens (Spreading-leaved earth moss).